A 230-amino-acid chain; its full sequence is Uracil-DNA glycosylase (230 aa).

Asp70 (proton acceptor) is an active-site residue.

This sequence belongs to the uracil-DNA glycosylase (UDG) superfamily. UNG family.

Its subcellular location is the cytoplasm. The enzyme catalyses Hydrolyzes single-stranded DNA or mismatched double-stranded DNA and polynucleotides, releasing free uracil.. Its function is as follows. Excises uracil residues from the DNA which can arise as a result of misincorporation of dUMP residues by DNA polymerase or due to deamination of cytosine. The chain is Uracil-DNA glycosylase from Pseudomonas putida (strain ATCC 700007 / DSM 6899 / JCM 31910 / BCRC 17059 / LMG 24140 / F1).